Here is a 376-residue protein sequence, read N- to C-terminus: RING-H2 finger protein ATL46 (376 aa).

The helical transmembrane segment at 45–65 (VLFVIVILAVLFFISGLLHLL) threads the bilayer. An RING-type; atypical zinc finger spans residues 143-185 (CAVCLCEFSEKDKLRLLPMCSHAFHLNCIDTWLQSNSTCPLCR). Basic and acidic residues-rich tracts occupy residues 296 to 305 (RLKPQDKESE) and 358 to 376 (DLPK…NDGR). Disordered stretches follow at residues 296–320 (RLKP…KINT) and 341–376 (FSSD…NDGR).

The protein belongs to the RING-type zinc finger family. ATL subfamily.

The protein localises to the membrane. The enzyme catalyses S-ubiquitinyl-[E2 ubiquitin-conjugating enzyme]-L-cysteine + [acceptor protein]-L-lysine = [E2 ubiquitin-conjugating enzyme]-L-cysteine + N(6)-ubiquitinyl-[acceptor protein]-L-lysine.. It functions in the pathway protein modification; protein ubiquitination. The protein is RING-H2 finger protein ATL46 (ATL46) of Arabidopsis thaliana (Mouse-ear cress).